Reading from the N-terminus, the 643-residue chain is Phosphomethylpyrimidine synthase (643 aa).

Residues N248, M277, Y306, H342, 362 to 364, 403 to 406, and E442 each bind substrate; these read SRG and DGLR. Position 446 (H446) interacts with Zn(2+). Y469 serves as a coordination point for substrate. H510 contributes to the Zn(2+) binding site. [4Fe-4S] cluster contacts are provided by C590, C593, and C598.

This sequence belongs to the ThiC family. In terms of assembly, homodimer. [4Fe-4S] cluster is required as a cofactor.

It catalyses the reaction 5-amino-1-(5-phospho-beta-D-ribosyl)imidazole + S-adenosyl-L-methionine = 4-amino-2-methyl-5-(phosphooxymethyl)pyrimidine + CO + 5'-deoxyadenosine + formate + L-methionine + 3 H(+). It participates in cofactor biosynthesis; thiamine diphosphate biosynthesis. In terms of biological role, catalyzes the synthesis of the hydroxymethylpyrimidine phosphate (HMP-P) moiety of thiamine from aminoimidazole ribotide (AIR) in a radical S-adenosyl-L-methionine (SAM)-dependent reaction. The sequence is that of Phosphomethylpyrimidine synthase from Burkholderia ambifaria (strain MC40-6).